We begin with the raw amino-acid sequence, 278 residues long: Elongation factor Ts (278 aa).

The segment at 81-84 is involved in Mg(2+) ion dislocation from EF-Tu; the sequence is TDFV.

This sequence belongs to the EF-Ts family.

The protein resides in the cytoplasm. Its function is as follows. Associates with the EF-Tu.GDP complex and induces the exchange of GDP to GTP. It remains bound to the aminoacyl-tRNA.EF-Tu.GTP complex up to the GTP hydrolysis stage on the ribosome. The sequence is that of Elongation factor Ts from Thermobifida fusca (strain YX).